The following is a 134-amino-acid chain: Arsenate reductase (134 aa).

Active-site nucleophile residues include C11, C83, and C90. Cystine bridges form between C11–C83 and C83–C90.

This sequence belongs to the low molecular weight phosphotyrosine protein phosphatase family. Thioredoxin-coupled ArsC subfamily.

It localises to the cytoplasm. It carries out the reaction arsenate + [thioredoxin]-dithiol + H(+) = arsenite + [thioredoxin]-disulfide + H2O. Functionally, catalyzes the reduction of arsenate [As(V)] to arsenite [As(III)]. The polypeptide is Arsenate reductase (Bacillus cereus (strain G9842)).